The following is a 947-amino-acid chain: DNA mismatch repair protein MutS 2 (947 aa).

The tract at residues 623-643 is disordered; it reads IPNDTHLGSGPVPASRDGSDD. Residue 659 to 666 coordinates ATP; the sequence is GPNMSGKS. Residues 841–916 form a disordered region; the sequence is AETADTGVEA…GAAAEDELPE (76 aa).

Belongs to the DNA mismatch repair MutS family.

Functionally, this protein is involved in the repair of mismatches in DNA. It is possible that it carries out the mismatch recognition step. This protein has a weak ATPase activity. This Haloarcula marismortui (strain ATCC 43049 / DSM 3752 / JCM 8966 / VKM B-1809) (Halobacterium marismortui) protein is DNA mismatch repair protein MutS 2.